The primary structure comprises 500 residues: Lysine--tRNA ligase (500 aa).

2 residues coordinate Mg(2+): Glu411 and Glu418.

The protein belongs to the class-II aminoacyl-tRNA synthetase family. Homodimer. The cofactor is Mg(2+).

It is found in the cytoplasm. It catalyses the reaction tRNA(Lys) + L-lysine + ATP = L-lysyl-tRNA(Lys) + AMP + diphosphate. This chain is Lysine--tRNA ligase, found in Actinobacillus pleuropneumoniae serotype 5b (strain L20).